Here is a 193-residue protein sequence, read N- to C-terminus: Potassium-transporting ATPase KdpC subunit (193 aa).

The chain crosses the membrane as a helical span at residues 9-29; the sequence is VLMTVVTTVLLGLVYPLLITG.

The protein belongs to the KdpC family. The system is composed of three essential subunits: KdpA, KdpB and KdpC.

The protein resides in the cell inner membrane. Its function is as follows. Part of the high-affinity ATP-driven potassium transport (or Kdp) system, which catalyzes the hydrolysis of ATP coupled with the electrogenic transport of potassium into the cytoplasm. This subunit acts as a catalytic chaperone that increases the ATP-binding affinity of the ATP-hydrolyzing subunit KdpB by the formation of a transient KdpB/KdpC/ATP ternary complex. This is Potassium-transporting ATPase KdpC subunit from Koribacter versatilis (strain Ellin345).